Reading from the N-terminus, the 271-residue chain is Small ribosomal subunit protein uS2 (271 aa).

Residues 229–242 are compositionally biased toward basic and acidic residues; that stretch reads KERKGKDAEEELKK. The tract at residues 229–271 is disordered; the sequence is KERKGKDAEEELKKAAAPKAAPAAEAAPAAEAPAAPVVEAAAE. The span at 243-271 shows a compositional bias: low complexity; that stretch reads AAAPKAAPAAEAAPAAEAPAAPVVEAAAE.

Belongs to the universal ribosomal protein uS2 family.

This is Small ribosomal subunit protein uS2 from Nitratidesulfovibrio vulgaris (strain DSM 19637 / Miyazaki F) (Desulfovibrio vulgaris).